The sequence spans 241 residues: Neuromodulin (241 aa).

Residues 1–26 (TKQVEKNEDGDQKIEQDGIKPEDKAH) show a composition bias toward basic and acidic residues. The interval 1–241 (TKQVEKNEDG…EESKADQENA (241 aa)) is disordered. In terms of domain architecture, IQ spans 25-54 (AHKAATKIQASFRGHITRKKLKGEKKGDAP). 2 stretches are compositionally biased toward low complexity: residues 80–95 (APAATEAAAADSAQQE) and 118–131 (SEQPAPQAATPAAS). Basic and acidic residues-rich tracts occupy residues 132–147 (SEEKTAAAAAPEREST) and 159–171 (KADEAQDKEEPKQ). Over residues 172-198 (ADVPAADTTATTTPAAEDATAKATAQP) the composition is skewed to low complexity. Basic and acidic residues-rich tracts occupy residues 208-220 (TEEKTDAVEETKP) and 232-241 (EESKADQENA).

The protein belongs to the neuromodulin family. In terms of assembly, binds calmodulin with a greater affinity in the absence of Ca(2+) than in its presence. Post-translationally, palmitoylated. Palmitoylation is essential for plasma membrane association.

Its subcellular location is the cell membrane. The protein resides in the cell projection. It localises to the growth cone membrane. It is found in the synapse. The protein localises to the filopodium membrane. This protein is associated with nerve growth. It is a major component of the motile 'growth cones' that form the tips of elongating axons. Plays a role in axonal and dendritic filopodia induction. The protein is Neuromodulin (GAP43) of Serinus canaria (Island canary).